Here is a 162-residue protein sequence, read N- to C-terminus: MLNQLENLTERVGGSNKLVDRWLHVRKHLLVAYYNLVGIKPGKESYMRLNEKALDDFCQSLVDYLSAGHFSIYERILHKLEGNGQLLHAAKIWPLLEDNTQRIMDYYDSSLETAIDHDNCLEFQQALSDIGEALEARFVLEDKLIMLVFDAMHDGARVKRPA.

Belongs to the Rsd/AlgQ family. As to quaternary structure, interacts with RpoD.

The protein resides in the cytoplasm. In terms of biological role, binds RpoD and negatively regulates RpoD-mediated transcription activation by preventing the interaction between the primary sigma factor RpoD with the catalytic core of the RNA polymerase and with promoter DNA. May be involved in replacement of the RNA polymerase sigma subunit from RpoD to RpoS during the transition from exponential growth to the stationary phase. This is Regulator of sigma D from Salmonella arizonae (strain ATCC BAA-731 / CDC346-86 / RSK2980).